Here is a 221-residue protein sequence, read N- to C-terminus: Glutathione peroxidase 6 (221 aa).

The N-terminal stretch at 1–19 (MFQQFQASCLVLFFLVGFA) is a signal peptide. Residue Sec73 is part of the active site. Sec73 is a non-standard amino acid (selenocysteine).

Belongs to the glutathione peroxidase family. Expressed in olfactory epithelium and embryos.

Its subcellular location is the secreted. The enzyme catalyses 2 glutathione + H2O2 = glutathione disulfide + 2 H2O. In Homo sapiens (Human), this protein is Glutathione peroxidase 6 (GPX6).